Consider the following 474-residue polypeptide: Stabilizer of axonemal microtubules 1 (474 aa).

Mn stretches follow at residues Lys30–Ile64, Pro65–Glu97, Asn98–Asp131, Lys132–Val165, Arg166–Ile199, Pro200–Ile232, Pro233–Met266, Pro267–Asp299, Arg300–Gly332, Arg333–Glu366, Pro367–Val400, and Pro401–Glu434. Residues Val446 to Ala474 are disordered. Residues Gln448 to Leu457 show a composition bias toward polar residues.

The protein belongs to the FAM154 family. In terms of assembly, associates with microtubules via the Mn regions. Widely expressed, with highest levels in testis. Expressed in mature spermatozoa (at protein level).

It is found in the cytoplasm. The protein resides in the cytoskeleton. Its subcellular location is the microtubule organizing center. The protein localises to the centrosome. It localises to the centriole. It is found in the cilium basal body. The protein resides in the cilium axoneme. Its subcellular location is the flagellum axoneme. Functionally, may play a role in the regulation of cilium length. Stabilizes microtubules at low temperature. The sequence is that of Stabilizer of axonemal microtubules 1 (SAXO1) from Homo sapiens (Human).